A 2350-amino-acid chain; its full sequence is Probable JmjC domain-containing histone demethylation protein 2C (2350 aa).

Disordered stretches follow at residues 96-302 and 314-336; these read TRAQ…LQEC and PKDR…NDTH. Residues 98-127 show a composition bias toward polar residues; the sequence is AQANSPRPAMNSQAAVPKQNTHQQQQQRSI. Residues S135 and S138 each carry the phosphoserine modification. The segment covering 141–160 has biased composition (basic and acidic residues); sequence DEEKMKEDKYDCVSRGENPK. A compositionally biased stretch (basic residues) spans 161 to 171; that stretch reads GKNKHVVTKRR. Basic and acidic residues predominate over residues 172–189; sequence KPEEAEKRLSMKRLRTDN. The segment covering 190 to 200 has biased composition (low complexity); that stretch reads ASDASESSDAE. Phosphoserine occurs at positions 191 and 194. Positions 257–280 are enriched in basic and acidic residues; sequence QEDKNHNEGEKPKSTDSHLQDKMT. Positions 281 to 302 are enriched in polar residues; that stretch reads LRSSEQATVADHNSNDSVLQEC. Phosphoserine occurs at positions 294 and 320. At T324 the chain carries Phosphothreonine. A phosphoserine mark is found at S420, S436, S457, S458, S460, S471, and S762. Disordered stretches follow at residues 426-486, 747-766, 859-883, 1030-1083, and 1422-1508; these read SVTE…NSQA, SSAE…PPLT, RENY…DKDV, RKES…DQSL, and EKVS…VPRS. Composition is skewed to low complexity over residues 863–874 and 1034–1045; these read SRVVPSSSSPKS and SYSSLSPPTLTP. The segment covering 1071 to 1083 has biased composition (polar residues); sequence SQSNFKNSSDQSL. Positions 1454-1463 are enriched in basic residues; that stretch reads KRQPKPTYKK. The span at 1464–1480 shows a compositional bias: basic and acidic residues; the sequence is KQNDLQKRKGEVEEDSK. The segment at 1657-1682 adopts a C6-type zinc-finger fold; that stretch reads CDACEATLFNVHWVCRKCGFVACLDC. A compositionally biased stretch (polar residues) spans 1776-1818; that stretch reads KTSVSLPESQQQNSPQKSQTNGNSSPGSASTDSRLTPPESQSP. Residues 1776–1874 form a disordered region; sequence KTSVSLPESQ…PASQSNEQGS (99 aa). S1800 is subject to Phosphoserine. The span at 1826–1849 shows a compositional bias: basic and acidic residues; sequence AEQKSREEKQENKEFTLEREIKED. Residues 1855–1874 show a composition bias toward polar residues; that stretch reads SDSPNGSTSPPASQSNEQGS. The short motif at 1876 to 1880 is the LXXLL motif element; that stretch reads LRDLL. Positions 1933–1962 are disordered; the sequence is PNKTSKINIKSEPNEEPKESSLPATDESNK. Residue K1942 forms a Glycyl lysine isopeptide (Lys-Gly) (interchain with G-Cter in SUMO2) linkage. Residues 2084–2308 form the JmjC domain; that stretch reads MPTRYEDFLR…QSFHLTQELR (225 aa). Fe cation is bound by residues H2146, E2148, and H2276.

This sequence belongs to the JHDM2 histone demethylase family. Requires Fe(2+) as cofactor.

It localises to the nucleus. In terms of biological role, probable histone demethylase that specifically demethylates 'Lys-9' of histone H3, thereby playing a central role in histone code. Demethylation of Lys residue generates formaldehyde and succinate. May be involved in hormone-dependent transcriptional activation, by participating in recruitment to androgen-receptor target genes. The polypeptide is Probable JmjC domain-containing histone demethylation protein 2C (Jmjd1c) (Mus musculus (Mouse)).